Reading from the N-terminus, the 402-residue chain is Tyrosine--tRNA ligase (402 aa).

The short motif at 48–57 (PSRPDLHLGH) is the 'HIGH' region element. A 'KMSKS' region motif is present at residues 232–236 (KMSKS). Residue Lys235 coordinates ATP. The 64-residue stretch at 339–402 (MPIIDLLTLL…KRKFFKIRSK (64 aa)) folds into the S4 RNA-binding domain.

The protein belongs to the class-I aminoacyl-tRNA synthetase family. TyrS type 2 subfamily. As to quaternary structure, homodimer.

It localises to the cytoplasm. It carries out the reaction tRNA(Tyr) + L-tyrosine + ATP = L-tyrosyl-tRNA(Tyr) + AMP + diphosphate + H(+). Functionally, catalyzes the attachment of tyrosine to tRNA(Tyr) in a two-step reaction: tyrosine is first activated by ATP to form Tyr-AMP and then transferred to the acceptor end of tRNA(Tyr). The sequence is that of Tyrosine--tRNA ligase from Chlorobium chlorochromatii (strain CaD3).